Here is a 360-residue protein sequence, read N- to C-terminus: Phospho-N-acetylmuramoyl-pentapeptide-transferase (360 aa).

10 helical membrane passes run 26 to 46 (TILG…AVIQ), 70 to 90 (GTPT…TLLW), 97 to 117 (YVWV…VDDY), 132 to 152 (AKFF…FSTA), 168 to 188 (VVLP…VGSS), 199 to 219 (GLAI…AYAT), 236 to 256 (AGEV…FLWF), 263 to 283 (VFMG…LAVV), 288 to 308 (LVLL…MLQV), and 338 to 358 (VIVR…AMLK).

Belongs to the glycosyltransferase 4 family. MraY subfamily. Mg(2+) serves as cofactor.

The protein resides in the cell inner membrane. The enzyme catalyses UDP-N-acetyl-alpha-D-muramoyl-L-alanyl-gamma-D-glutamyl-meso-2,6-diaminopimeloyl-D-alanyl-D-alanine + di-trans,octa-cis-undecaprenyl phosphate = di-trans,octa-cis-undecaprenyl diphospho-N-acetyl-alpha-D-muramoyl-L-alanyl-D-glutamyl-meso-2,6-diaminopimeloyl-D-alanyl-D-alanine + UMP. It functions in the pathway cell wall biogenesis; peptidoglycan biosynthesis. Catalyzes the initial step of the lipid cycle reactions in the biosynthesis of the cell wall peptidoglycan: transfers peptidoglycan precursor phospho-MurNAc-pentapeptide from UDP-MurNAc-pentapeptide onto the lipid carrier undecaprenyl phosphate, yielding undecaprenyl-pyrophosphoryl-MurNAc-pentapeptide, known as lipid I. The sequence is that of Phospho-N-acetylmuramoyl-pentapeptide-transferase from Alkalilimnicola ehrlichii (strain ATCC BAA-1101 / DSM 17681 / MLHE-1).